The following is a 129-amino-acid chain: V-type proton ATPase subunit F 2 (129 aa).

The protein belongs to the V-ATPase F subunit family. In terms of assembly, V-ATPase is a heteromultimeric enzyme made up of two complexes: the ATP-hydrolytic V1 complex and the proton translocation V0 complex. The V1 complex consists of three catalytic AB heterodimers that form a heterohexamer, three peripheral stalks each consisting of EG heterodimers, one central rotor including subunits D and F, and the regulatory subunits C and H. The proton translocation complex V0 consists of the proton transport subunit a, a ring of proteolipid subunits c9c'', rotary subunit d, subunits e and f, and the accessory subunits VhaAC45 and ATP6AP2.

In terms of biological role, subunit of the V1 complex of vacuolar(H+)-ATPase (V-ATPase), a multisubunit enzyme composed of a peripheral complex (V1) that hydrolyzes ATP and a membrane integral complex (V0) that translocates protons. V-ATPase is responsible for acidifying and maintaining the pH of intracellular compartments and in some cell types, is targeted to the plasma membrane, where it is responsible for acidifying the extracellular environment. The protein is V-type proton ATPase subunit F 2 (Vha14-2) of Drosophila melanogaster (Fruit fly).